Here is a 276-residue protein sequence, read N- to C-terminus: Secreted RxLR effector protein 120 (276 aa).

The N-terminal stretch at 1 to 21 (MRGAYYVITALLVVASSQTSA) is a signal peptide. The short motif at 48–65 (QSLRGSRDVPDDLAHEER) is the RxLR-dEER element. The disordered stretch occupies residues 97 to 130 (GKRPRVAEKDALEKASGADEASKKPRNTATDDAF). The segment covering 101–119 (RVAEKDALEKASGADEASK) has biased composition (basic and acidic residues).

It belongs to the RxLR effector family.

It localises to the secreted. The protein resides in the host nucleus. Secreted effector that completely suppresses the host cell death induced by cell death-inducing proteins. The protein is Secreted RxLR effector protein 120 of Plasmopara viticola (Downy mildew of grapevine).